We begin with the raw amino-acid sequence, 691 residues long: MANTYLLEVGVEEMPAHVVTPSIKQLHERVAKYLKEQRITFDDIQEFATPRRMALLIHGLSDKQPDIDESVKGPAKKIAQDADGNWTKAAIGFTRGQGASVEDIEFKEVKGVEYVFVEKHIAGKTVAEVLQGLPAVITSMTFPTLMKWGYNNLQFIRPIRWLVSLLNDEVVPFNILDVEAGRETQGHRFLGHPVEIAKADDYEETLNNDFVIADQTKRKNLIKDQITKIINENNWQVDWDEDLLEEVNNLVEWPTAFAGSFDEKYLALPDPVLITSMKDNQRFFCVRDGDGNLLSHFISVRNGNTDYLDNVIKGNERVLVPRLEDAQFFYQEDQKLTIDEYVERLKKVSFHDKISSMYDKMQRVAVIANVLGKQLNLSDEELADLDRAAHIYKFDLTTQMVGEFAELQGIMGEIYAKLFGEKDDVATAIREHYMPISAEGELPQTKIGAVLAIADKLDSIMSFFAVDMIPSGSNDPYALRRQAFGIVRIIADRGWHLPLLSIQSEIAPAFENAEINVSFDLNKNSDEVRSFFLDRIKQLFHGQKVRHDIIDAATDTRQNDIANILEAIQTIDDHKDDDNFKEDIEALTRVLRIAKKDKRPVSELVVDPNLFENPSEAKMHTAVSELIKENQQTVSENFAALRTLTPIISEYFDENMIMDKNEDIRNNRLAQLSILAHQASLIGNLDNLIVK.

Belongs to the class-II aminoacyl-tRNA synthetase family. Tetramer of two alpha and two beta subunits.

It localises to the cytoplasm. The enzyme catalyses tRNA(Gly) + glycine + ATP = glycyl-tRNA(Gly) + AMP + diphosphate. The polypeptide is Glycine--tRNA ligase beta subunit (Limosilactobacillus reuteri (strain DSM 20016) (Lactobacillus reuteri)).